A 902-amino-acid polypeptide reads, in one-letter code: Potassium/sodium hyperpolarization-activated cyclic nucleotide-gated channel 1 (902 aa).

Residues 1–75 are disordered; that stretch reads MEGGGKPNSA…PAGSFEDAEG (75 aa). Topologically, residues 1–131 are cytoplasmic; it reads MEGGGKPNSA…WIIHPYSDFR (131 aa). Residues 132–153 form a helical membrane-spanning segment; that stretch reads FYWDLIMLIMMVGNLVIIPVGI. Topologically, residues 154–162 are extracellular; it reads TFFTEQTTT. A helical membrane pass occupies residues 163–183; that stretch reads PWIIFNVASDTVFLLDLIMNF. The Cytoplasmic segment spans residues 184–204; that stretch reads RTGTVNEDSSEIILDPKVIKM. A helical transmembrane segment spans residues 205 to 225; that stretch reads NYLKSWFVVDFISSIPVDYIF. The Extracellular portion of the chain corresponds to 226-249; that stretch reads LIVEKGMDSEVYKTARALRIVRFT. A helical; Voltage-sensor membrane pass occupies residues 250–270; sequence KILSLLRLLRLSRLIRYIHQW. Residues 271–284 are Cytoplasmic-facing; it reads EEIFHMTYDLASAV. A helical transmembrane segment spans residues 285 to 307; it reads VRIFNLIGMMLLLCHWDGCLQFL. Residues 308 to 333 are Extracellular-facing; the sequence is VPLLQDFPPDCWVSLNEMVNDSWGKQ. A glycan (N-linked (GlcNAc...) asparagine) is linked at Asn-327. The segment at residues 334-355 is an intramembrane region (pore-forming); sequence YSYALFKAMSHMLCIGYGAQAP. Residues 347–351 carry the Selectivity filter motif; the sequence is CIGYG. Topologically, residues 356-360 are extracellular; it reads VSMSD. A helical transmembrane segment spans residues 361–381; the sequence is LWITMLSMIVGATCYAMFVGH. The Cytoplasmic segment spans residues 382–902; it reads ATALIQSLDS…AEKPRFASNL (521 aa). Residues Gly-528, Glu-529, Cys-531, Arg-538, Thr-539, Arg-579, and Arg-582 each coordinate 3',5'-cyclic AMP. 3 disordered regions span residues 634-681, 713-824, and 858-902; these read TALN…QPSA, ASQL…VGES, and MSSG…ASNL. Composition is skewed to low complexity over residues 639–680, 720–736, and 744–769; these read TSST…PQPS, QQPQ…QTQP, and QPQQ…QQPQ. The span at 770–793 shows a compositional bias: polar residues; it reads TPGSSTPKNEVHKSTQALHNTNLT. The span at 867 to 877 shows a compositional bias: pro residues; sequence RGVPPAPPPPA. Residues 889-902 are compositionally biased toward basic and acidic residues; that stretch reads KDPDAEKPRFASNL.

The protein belongs to the potassium channel HCN family. As to quaternary structure, homotetramer. Heterotetramer with HCN2. The potassium channel is composed of a homo- or heterotetrameric complex of pore-forming subunits. Interacts with KCNE2. Interacts with the SH3 domain of CSK. Highly expressed in cerebral cortex, cerebellum, throughout the hippocampus, in medial habenula, anterior dorsal nucleus in the thalamus, tenia tecta, several nuclei of the general motor system and in optic nerve layer. Detected in a subset of elongated cells in taste buds.

The protein resides in the cell membrane. The catalysed reaction is Na(+)(in) = Na(+)(out). The enzyme catalyses K(+)(in) = K(+)(out). Activated by cAMP, and at 10-100 times higher concentrations, also by cGMP. cAMP binding promotes tetramerization and formation of an active channel. Compared to other family members, cAMP has less stimulatory effect on HCN1 because part of the molecules already contain bound cAMP and form homotetramers when cAMP levels are low, this inherent tetramerization in HCN1 results in a weaker response to increased cAMP. In terms of biological role, hyperpolarization-activated ion channel that are permeable to sodium and potassium ions. Exhibits weak selectivity for potassium over sodium ions. Contributes to the native pacemaker currents in heart (If) and in neurons (Ih). Participates in cerebellar mechanisms of motor learning. May mediate responses to sour stimuli. The polypeptide is Potassium/sodium hyperpolarization-activated cyclic nucleotide-gated channel 1 (Hcn1) (Rattus norvegicus (Rat)).